The chain runs to 730 residues: Nitrogen regulatory protein GLN3 (730 aa).

The segment at 1 to 45 (MQDDPENSKLYDLLNSHLDVHGRSNEEPRQTGDSRSQSSGNTGEN) is disordered. Residues 18-32 (LDVHGRSNEEPRQTG) show a composition bias toward basic and acidic residues. Residues 33-43 (DSRSQSSGNTG) show a composition bias toward polar residues. Residues 129–137 (GEIAQLWDF) carry the 9aaTAD motif. 2 disordered regions span residues 187–208 (SSTS…TNAQ) and 224–262 (SSSA…TTNS). Over residues 224-240 (SSSAMNITNNNNSNNSN) the composition is skewed to low complexity. Position 251 is a phosphoserine (S251). Over residues 252-262 (IGLSSSNTTNS) the composition is skewed to polar residues. A phosphoserine mark is found at S267 and S285. A GATA-type zinc finger spans residues 306–330 (CFNCKTFKTPLWRRSPEGNTLCNAC). 2 disordered regions span residues 355 to 398 (SKKR…SLQQ) and 449 to 516 (ANFN…NSQQ). Low complexity-rich tracts occupy residues 370–384 (TPSA…VTTT), 449–470 (ANFN…HNSN), and 482–499 (RSST…SSRS). A Phosphoserine modification is found at S469. 2 positions are modified to phosphoserine: S552 and S562. 2 disordered regions span residues 593-673 (LHEQ…SNSF) and 696-717 (DVSA…KESS). Composition is skewed to low complexity over residues 596-631 (QQQV…NFVS), 641-651 (TPVDSPSVSRP), and 658-672 (TSLL…ESNS).

The protein resides in the nucleus. Its function is as follows. Positive nitrogen regulatory protein. Required for the activation of transcription of a number of genes (including the allantoin pathway genes) in response to the replacement of glutamine by glutamate as source of nitrogen. Binds the nitrogen upstream activation sequence of GLN1, the gene encoding glutamine synthetase. URE2 may catalytically inactivate GLN3 in response to an increase in the intracellular concentration of glutamine. This chain is Nitrogen regulatory protein GLN3 (GLN3), found in Saccharomyces cerevisiae (strain ATCC 204508 / S288c) (Baker's yeast).